A 550-amino-acid polypeptide reads, in one-letter code: Acyl-CoA-dependent acyltransferase MAC2 (550 aa).

It belongs to the trichothecene O-acetyltransferase family.

It participates in secondary metabolite biosynthesis. Acyl-CoA-dependent acyltransferase; part of the gene cluster that mediates the biosynthesis of mannosylerythritol lipids (MELs), surface-active substances that enhance the availability of water-insoluble substrates. Depending on the number of acetyl groups, mannosylerythritol lipids can be differentiated into MEL A (fully acetylated), MEL B and MEL C (monoacetylated at R-6 and R-4, respectively), and the fully deacetylated MEL D. The first step in the pathway is the generation of mannosylerythritol by the glycosyltransferase EMT1 which catalyzes the transfer of GDP-mannose to the C-4 atom of meso-erythritol. This reaction has to be stereospecific, since only mannosyl-D-erythritol is generated. The produced disaccharide is subsequently acylated with fatty acids of various lengths by the acyltransferases MAC1 and MAC2 at positions C-2 and C-3, repectively. The existence of MEL derivatives which carry an acetyl group at C-2 implies that at least MAC1 also accepts acetyl-CoA as a donor. The final step of MEL biosynthesis is the acetylation of the fully acylated mannosylerythritol lipids catalyzed by the acetyl-CoA-dependent acetyltransferase MAT1. MAT1 displays a relaxed regioselectivity and is able to transfer acetylgroups to both positions C-4 and C-6 of the mannosyl moiety. The chain is Acyl-CoA-dependent acyltransferase MAC2 from Pseudozyma antarctica (strain T-34) (Yeast).